The following is a 149-amino-acid chain: Large ribosomal subunit protein bL9 (149 aa).

It belongs to the bacterial ribosomal protein bL9 family.

Binds to the 23S rRNA. The protein is Large ribosomal subunit protein bL9 of Geobacillus kaustophilus (strain HTA426).